The following is a 5100-amino-acid chain: Hemicentin-2 (5100 aa).

A signal peptide spans 1-19 (MTPGAQLLPLLVAISTAVA). Residues 37-211 (DATLAFVFDV…QVSEVLKWVE (175 aa)) enclose the VWFA domain. N330, N347, N380, N479, N526, N548, and N675 each carry an N-linked (GlcNAc...) asparagine glycan. 43 Ig-like C2-type domains span residues 426–515 (PGVP…IVIT), 517–601 (PPPQ…RATT), 609–692 (PQVS…ETVT), 699–782 (PSVS…IQLV), 787–877 (PRLT…LVVT), 882–968 (PQIA…VELV), 973–1058 (PRIH…MWLS), 1063–1156 (PMIK…YVLR), 1161–1239 (PQVQ…WKLE), 1246–1335 (PHWG…AKLV), 1340–1437 (PSIR…FNLA), 1442–1531 (PSLL…FQLS), 1536–1624 (PTIW…TSLE), 1629–1717 (PTIE…YSVE), 1722–1810 (PQLL…VEVS), 1825–1913 (SAHH…KDVT), 1920–2008 (PNIE…LRVN), 2011–2100 (PRIT…VILQ), 2105–2189 (PSIL…KHFN), 2196–2285 (PAFP…QSLE), 2290–2379 (PQVT…FALS), 2384–2473 (PHLT…FSVE), 2478–2566 (PSIE…TQLS), 2571–2662 (PTIL…YHVE), 2667–2758 (PSIS…QDFN), 2781–2871 (PHEE…YELL), 2875–2964 (PPVI…KLFT), 2971–3058 (PQIS…VQLN), 3063–3153 (PSFK…FVLA), 3157–3245 (PPTF…FVVS), 3250–3340 (PQIQ…HTVN), 3345–3432 (PTIK…RNFT), 3438–3523 (PPIL…FQLT), 3528–3609 (PHIE…FRVR), 3614–3702 (PNVV…FRVE), 3707–3793 (PTIQ…LDLR), 3798–3886 (PAIA…YQVT), 3891–3977 (PTIA…MVLT), 3982–4067 (PVVK…TRLV), 4071–4158 (PPVI…VHLT), 4163–4244 (PVLT…QAVS), 4252–4336 (PVLQ…KVVT), and 4343–4428 (PVFQ…ALLA). The cysteines at positions 449 and 497 are disulfide-linked. Disulfide bonds link C539/C588, C630/C678, C720/C766, C808/C859, C903/C952, and C994/C1042. An omega-N-methylarginine mark is found at R909, R914, and R915. N-linked (GlcNAc...) asparagine glycosylation is found at N1024 and N1068. Disulfide bonds link C1091–C1140 and C1182–C1225. N-linked (GlcNAc...) asparagine glycosylation is present at N1264. The tract at residues 1265-1293 (ASLPCPAQGTPKPRITWRRGPSSEPLNGR) is disordered. A disulfide bond links C1269 and C1319. Residue N1350 is glycosylated (N-linked (GlcNAc...) asparagine). Intrachain disulfides connect C1363-C1421 and C1465-C1515. A glycan (N-linked (GlcNAc...) asparagine) is linked at N1542. 4 disulfide bridges follow: C1559-C1608, C1653-C1701, C1745-C1794, and C1846-C1899. Residues N1676 and N1787 are each glycosylated (N-linked (GlcNAc...) asparagine). N1934 is a glycosylation site (N-linked (GlcNAc...) asparagine). Intrachain disulfides connect C1941-C1990 and C2033-C2084. N2034, N2113, and N2119 each carry an N-linked (GlcNAc...) asparagine glycan. 2 cysteine pairs are disulfide-bonded: C2126/C2175 and C2218/C2269. Residues N2309, N2315, N2345, and N2395 are each glycosylated (N-linked (GlcNAc...) asparagine). A disulfide bridge links C2314 with C2363. C2408 and C2457 form a disulfide bridge. N-linked (GlcNAc...) asparagine glycosylation is found at N2469, N2502, N2541, N2606, and N2688. 2 disulfides stabilise this stretch: C2501-C2550 and C2597-C2646. 2 cysteine pairs are disulfide-bonded: C2695–C2744 and C2806–C2855. The N-linked (GlcNAc...) asparagine glycan is linked to N2892. A disulfide bridge connects residues C2901 and C2950. N2986 is a glycosylation site (N-linked (GlcNAc...) asparagine). Disulfide bonds link C2993-C3042, C3088-C3137, C3180-C3229, C3273-C3324, and C3369-C3418. The N-linked (GlcNAc...) asparagine glycan is linked to N3430. Cystine bridges form between C3462–C3507, C3551–C3593, and C3637–C3686. N3560 and N3575 each carry an N-linked (GlcNAc...) asparagine glycan. N-linked (GlcNAc...) asparagine glycans are attached at residues N3717 and N3721. C3728 and C3777 form a disulfide bridge. A glycan (N-linked (GlcNAc...) asparagine) is linked at N3806. Cystine bridges form between C3819-C3870, C3912-C3961, C4003-C4051, C4093-C4142, C4184-C4231, C4274-C4322, and C4364-C4412. N4304 is a glycosylation site (N-linked (GlcNAc...) asparagine). The region spanning 4432–4654 (EPRGSRGSMT…QTEENEVGCP (223 aa)) is the Nidogen G2 beta-barrel domain. 2 N-linked (GlcNAc...) asparagine glycosylation sites follow: N4455 and N4601. One can recognise an EGF-like 1; calcium-binding domain in the interval 4668 to 4708 (DKDECSGGPSPCSHTCRNAPGHFSCSCPTGFSLAWDHRNCR). 11 disulfide bridges follow: C4672/C4683, C4679/C4692, C4694/C4707, C4713/C4726, C4720/C4735, C4739/C4752, C4758/C4771, C4765/C4780, C4801/C4812, C4808/C4821, and C4823/C4836. The region spanning 4709 to 4753 (DVDECAGNTHLCQEEQRCVNLLGSYNCLASCRPGFRVTADGSNCE) is the EGF-like 2; calcium-binding domain. Residues 4754–4789 (DVDECLEQLDECHYNQLCENTPGGHHCGCPRGYRQQ) enclose the EGF-like 3; calcium-binding domain. The EGF-like 4; calcium-binding domain maps to 4797 to 4837 (DINECLQLPTPCVYQCQNLQGSYRCLCPPGQTLLRDGRTCI). Residue N4845 is glycosylated (N-linked (GlcNAc...) asparagine). The region spanning 4904 to 4943 (DLDECRVRSLCQHACQNTEGSYYCLCPSGYRLLPSGKNCQ) is the EGF-like 5; calcium-binding domain. Cystine bridges form between C4908–C4918, C4914–C4927, and C4929–C4942. N-linked (GlcNAc...) asparagine glycosylation occurs at N5035.

Reported to be phosphorylated; however as this position is extracellular, the in vivo relevance is unsure. In terms of tissue distribution, in neonatal skin, localized in the pericellular space of basal epidermal keratinocytes (at protein level). In adult skin, restricted to basal keratinocytes of hair follicles and the interfollicular epidermis. Absent from the myotendinous junction but present in skeletal muscle (at protein level). Expressed in the pericellular extracellular matrix of epithelial cells in a number of tissues including embryonic trophectoderm and adult skin and tongue. Also present in the extracellular matrix of some, but not all, blood vessels. Expressed primarily in epithelial cells in the embryonic epidermis, lung, intestine, skeletal hindlimb muscle, tongue and the muscular layers of the esophagus.

The protein resides in the secreted. Its subcellular location is the extracellular space. It localises to the extracellular matrix. It is found in the cleavage furrow. This Mus musculus (Mouse) protein is Hemicentin-2 (Hmcn2).